A 284-amino-acid chain; its full sequence is Acetylglutamate kinase (284 aa).

Residues 64–65, arginine 86, and asparagine 177 each bind substrate; that span reads GG.

The protein belongs to the acetylglutamate kinase family. ArgB subfamily.

Its subcellular location is the cytoplasm. It carries out the reaction N-acetyl-L-glutamate + ATP = N-acetyl-L-glutamyl 5-phosphate + ADP. It participates in amino-acid biosynthesis; L-arginine biosynthesis; N(2)-acetyl-L-ornithine from L-glutamate: step 2/4. Its function is as follows. Catalyzes the ATP-dependent phosphorylation of N-acetyl-L-glutamate. This chain is Acetylglutamate kinase, found in Haemophilus ducreyi (strain 35000HP / ATCC 700724).